The following is a 173-amino-acid chain: T-cell receptor beta-1 chain C region (173 aa).

Residues 1-146 form a c region region; it reads EDLRNVTPPK…GVLSATILYE (146 aa). A disulfide bridge connects residues Cys-31 and Cys-71. Asn-67 and Asn-116 each carry an N-linked (GlcNAc...) asparagine glycan. The helical transmembrane segment at 146 to 167 threads the bilayer; that stretch reads EILLGKATLYAVLVSTLVVMAM. At 168–173 the chain is on the cytoplasmic side; that stretch reads VKRKNS.

It is found in the membrane. This is T-cell receptor beta-1 chain C region from Mus musculus (Mouse).